Reading from the N-terminus, the 518-residue chain is E3 ubiquitin-protein ligase TRIM39 (518 aa).

An RING-type zinc finger spans residues 29–70 (CSVCLEYLKEPVIIECGHNFCKACITRWWEDLERDFPCPVCR). The B box-type zinc finger occupies 102–143 (RDESLCPQHHEALSLFCYEDQEAVCLICAISHTHRAHTVVPL). Zn(2+) contacts are provided by C107, H110, C129, and H135. Positions 181-250 (ELKRLVESRR…AHLAAEVEGK (70 aa)) form a coiled coil. 2 interaction with CDKN1A regions span residues 268-337 (KNIP…QLIA) and 389-518 (TSGR…TDWE). Residues 319–514 (SNFPRQYFAL…NAAPLTIRPP (196 aa)) enclose the B30.2/SPRY domain.

The protein belongs to the TRIM/RBCC family. In terms of assembly, interacts with MOAP1. Interacts with CDKN1A. Autoubiquitinated.

The protein resides in the cytoplasm. The protein localises to the cytosol. It is found in the mitochondrion. It localises to the nucleus. The catalysed reaction is S-ubiquitinyl-[E2 ubiquitin-conjugating enzyme]-L-cysteine + [acceptor protein]-L-lysine = [E2 ubiquitin-conjugating enzyme]-L-cysteine + N(6)-ubiquitinyl-[acceptor protein]-L-lysine.. It participates in protein modification; protein ubiquitination. Functionally, E3 ubiquitin-protein ligase. May facilitate apoptosis by inhibiting APC/C-Cdh1-mediated poly-ubiquitination and subsequent proteasome-mediated degradation of the pro-apoptotic protein MOAP1. Regulates the G1/S transition of the cell cycle and DNA damage-induced G2 arrest by stabilizing CDKN1A/p21. Positively regulates CDKN1A/p21 stability by competing with DTL for CDKN1A/p21 binding, therefore disrupting DCX(DTL) E3 ubiquitin ligase complex-mediated CDKN1A/p21 ubiquitination and degradation. In Pan troglodytes (Chimpanzee), this protein is E3 ubiquitin-protein ligase TRIM39 (TRIM39).